Here is a 1474-residue protein sequence, read N- to C-terminus: MGKRWLPSLALLPLPPPLLLLLLLLLPTNASAPQKPIYMVMVPSLLHAGTPEKGCLLFNHLNETVTVKVSMESVRGNQSLFTDLVVDKDLFHCASFIVPQSSSNEVMFLTVQVKGPTHEFRRRSTVLIKTKESLVFAQTDKPIYKPGQMVRFRVVSLDENFHPLNELIPLLYIQDSKKNRIAQWQNFRLEGGLKQLSFPLSSEPTQGSYKVVIRTESGRTVEHPFSVKEFVLPKFEVKVAVPETITILEEEMNVSVCGIYTYGKPVPGHVTVNICRKYSNPSSCFGEESLAFCEKFSQQLDGRGCFSQLVKTKSFQLKRQEYEMQLDVNAKIQEEGTGVEETGKGLTKITRTITKLSFVNVDTHFRQGIPFVGQVLLVDGRGTPIPYEMIFIGADEANQNINTTTDKNGLARFSINTDDIMGTSLTVRAKYKDSNVCYGFRWLTEENVEAWHTANAVFSPSRSFVHLESLPYKLRCEQTLAVQAHYILNDEAVLERKELVFYYLMMAKGGIVRAGTHVLPVTQGHKKGHFSILISMETDLAPVARLVLYTILPNGEVVGDTVKYEIEKCLANKVDLVFHPNIGLPATRAFLSVMASPQSLCGLRAVDQSVLLTKPEAELSASLVYDLLPVKDLTGFPKGVNQQEEDTNGCLKQNDTYINGILYSPVQNTNEEDMYGFLKDMGLKVFTNLNIRKPKVCERLGVNKIPAAYHLVSQGHMDAFLESSESPTETTRSYFPETWIWDLVIVDSTGVAEMEVTVPDTITEWKAGAFCLSNDTGLGLSPVIDFQAFQPFFVDLTMPYSVIRGEAFTLKATVLNYLQTCIRVGVQLEASPDFLATPEEKEQKSHCICMNERHTMSWAVIPKSLGNVNFTVSAEALDSKELCRNEVPVVPERGKKDTIIKSLLVEPEGLENEVTFNSLLCPTGAEVSEQISLKLPSDVVEESARASVTVLGDILGSAMQNTQDLLKMPYGCGEQNMVLFAPNIYVLDYLNETEQLTQEIKTKAITYLNTGYQRQLNYKHRDGSYSTFGDKPGRSHANTWLTAFVLKSFAQARRYIFIDESHITQALTWLSQQQKDNGCFRSSGSLLNNAMKGGVEDEVTLSAYITIALLEMSLPVTHPVVRNALFCLDTAWKSARRGASGNHVYTKALLAYAFALAGNQDTKKEILKSLDEEAVKEDNSVHWTRAQKPRVPADLWYQPQAPSAEVEMTAYVLLAYLTTELVPTREDLTAAMLIVKWLTKQQNSHGGFSSTQDTVVALHALSKYGAATFTRAKKAAHVTIQSSGAFYTKFQVNNDNQLLLQRVTLPTVPGDYTAKVAGEGCVYLQTSLKYSVLPREKEFPFALVVQTLPGTCEDLKAHTTFQISLNISYIGSRSDSNMAIADVKMVSGFIPLKPTVKMLERSVHVSRTEVSNNHVLIYLDKVSNQMLTLFFMVQQDIPVRDLKPAIVKVYDYYEKDEFAVAKYSAPCSAGYGNA.

The N-terminal stretch at 1–32 (MGKRWLPSLALLPLPPPLLLLLLLLLPTNASA) is a signal peptide. An intrachain disulfide couples Cys-55 to Cys-93. N-linked (GlcNAc...) asparagine glycosylation is found at Asn-62, Asn-77, and Asn-253. Disulfide bonds link Cys-257/Cys-305 and Cys-275/Cys-293. Asn-402 carries N-linked (GlcNAc...) asparagine glycosylation. 3 disulfide bridges follow: Cys-476-Cys-569, Cys-601-Cys-771, and Cys-650-Cys-697. The segment at 623–752 (LVYDLLPVKD…LVIVDSTGVA (130 aa)) is bait region. Asn-654 and Asn-774 each carry an N-linked (GlcNAc...) asparagine glycan. Intrachain disulfides connect Cys-821-Cys-849, Cys-847-Cys-883, Cys-921-Cys-1321, Cys-1079-Cys-1127, and Cys-1352-Cys-1467. N-linked (GlcNAc...) asparagine glycosylation occurs at Asn-869. The segment at residues 972–975 (CGEQ) is a cross-link (isoglutamyl cysteine thioester (Cys-Gln)). Asn-991 carries an N-linked (GlcNAc...) asparagine glycan. Residue Asn-1366 is glycosylated (N-linked (GlcNAc...) asparagine).

It belongs to the protease inhibitor I39 (alpha-2-macroglobulin) family. Homotetramer; disulfide-linked. In terms of tissue distribution, expressed in uterus, mesometrial lymphoid aggregate and mammary tissue during pregnancy. Expressed in ovary, testis and kidney. Low level expression in heart. Not expressed in liver.

The protein resides in the secreted. In terms of biological role, is able to inhibit all four classes of proteinases by a unique 'trapping' mechanism. This protein has a peptide stretch, called the 'bait region' which contains specific cleavage sites for different proteinases. When a proteinase cleaves the bait region, a conformational change is induced in the protein which traps the proteinase. The entrapped enzyme remains active against low molecular weight substrates (activity against high molecular weight substrates is greatly reduced). Following cleavage in the bait region a thioester bond is hydrolyzed and mediates the covalent binding of the protein to the proteinase. This Mus musculus (Mouse) protein is Alpha-2-macroglobulin-P.